We begin with the raw amino-acid sequence, 109 residues long: MNSVLGNQTDVAGLFLANSSEALERAVRCCTQASVVTDDGFAEGGPDERSLYIMRVVQIAVMCVLSLTVVFGIFFLGCNLLIKSEGMINFLVKDRRPSKEVEAVVVGPY.

N-linked (GlcNAc...) asparagine glycosylation is found at asparagine 7 and asparagine 18. A helical transmembrane segment spans residues 56 to 76 (VVQIAVMCVLSLTVVFGIFFL). The residue at position 98 (serine 98) is a Phosphoserine.

Belongs to the reprimo family.

The protein resides in the cytoplasm. Its subcellular location is the membrane. Its function is as follows. May be involved in the regulation of p53-dependent G2 arrest of the cell cycle. Seems to induce cell cycle arrest by inhibiting CDK1 activity and nuclear translocation of the CDC2 cyclin B1 complex. In Rattus norvegicus (Rat), this protein is Protein reprimo (Rprm).